A 509-amino-acid polypeptide reads, in one-letter code: Cytochrome P450 monooxygenase aba1 (509 aa).

The N-terminal stretch at 1-31 is a signal peptide; sequence MSNSILNLGSFACLLSLGSIVLWYTISAVLA. The N-linked (GlcNAc...) asparagine glycan is linked to Asn-402. Cys-451 contributes to the heme binding site. Residue Asn-462 is glycosylated (N-linked (GlcNAc...) asparagine).

The protein belongs to the cytochrome P450 family. Heme is required as a cofactor.

It functions in the pathway hormone biosynthesis. In terms of biological role, cytochrome P450 monooxygenase; part of the gene cluster that mediates the biosynthesis of abscisic acid (ABA), a phytohormone that acts antagonistically toward salicylic acid (SA), jasmonic acid (JA) and ethylene (ETH) signaling, to impede plant defense responses. The first step of the pathway catalyzes the reaction from farnesyl diphosphate to alpha-ionylideneethane performed by the alpha-ionylideneethane synthase aba3 via a three-step reaction mechanism involving 2 neutral intermediates, beta-farnesene and allofarnesene. The cytochrome P450 monooxygenase aba1 might then be involved in the conversion of alpha-ionylideneethane to alpha-ionylideneacetic acid. Alpha-ionylideneacetic acid is further converted to abscisic acid in 2 steps involving the cytochrome P450 monooxygenase aba2 and the short-chain dehydrogenase/reductase aba4, via the intermediates 1'-deoxy-ABA or 1',4'-trans-diol-ABA, depending on the order of action of these 2 enzymes. Aba2 is responsible for the hydroxylation of carbon atom C-1' and aba4 might be involved in the oxidation of the C-4' carbon atom. This chain is Cytochrome P450 monooxygenase aba1 (aba1), found in Botryotinia fuckeliana (strain B05.10) (Noble rot fungus).